A 576-amino-acid chain; its full sequence is MAWVTQAYSSGLSQNSIISLTGNDRTVADGTFNSMIMPRAVIANEREHFMKTRIDKIEHDLSRNAKQEMMDRQSLAEDYSALNLAVGQEIKLDIATQHQLNRLGSSMYKADHEREAELTDLINRIRENEVTVNGILENQKAITAAERADLLLEVVASTAKSVSAAGRAAADGSGVVPVFGPSVANGIKVGIDIADSVAEAAIAVKESGIITQLNDVYHAFQSVHVAPNDIIKPAAVVAGTSTELIGNLQAIYSRLRSHSDIGFKKATVGDVIPHSYMVKPVNSTEYASWQLYVIHPVQGSLGLVVQVMGDALTYNVFAQYGTTSASEFGKTVLTGGATNTALEGTKVKFQTKVTAQQALALTMALKDAASMLSQGELIGYFEQYINLALEPDNLSLQDNMHKYHHLLTSQNSPIDWNYHDEEMHKWLDSRKITNYDTMKQKDGVVIADIHIPKVFNDLRNTTLHCKLEGKQNIAGYTVYEYLIGPWAHYGDIDYSVVVDTLNEETKWYCEIIGIDGHLIIEKSVQHKPEKILELTVNDDGLTSFKGKNHDRLKLKVYVKDSLAVKVFRNWIGINGT.

It localises to the virion. The polypeptide is Outer capsid protein VP4 (Segment-4) (Banna virus (BAV)).